A 253-amino-acid chain; its full sequence is MKFCIIGYPVRHSISPRLYNEYFKRAGMNHSYGMEEIPPESFDTEIRRILEEYDGFNATIPHKERVMRYVEPSEDAQRIKAVNCVFRGKGYNTDWVGVVKSLEGVEVKEPVVVVGAGGAARAVIYALLQMGVKDIWVVNRTIERAKALDFPVKIFSLDQLDEVVKKAKSLFNTTSVGMKGEELPVSDDSLKNLSLVYDVIYFDTPLVVKARKLGVKHIIKGNLMFYYQAMENLKIWGIYDEEVFKEVFGEVLK.

Shikimate-binding positions include S13 to S15 and T59. Catalysis depends on K63, which acts as the Proton acceptor. Residue E74 participates in NADP(+) binding. Shikimate-binding residues include N83 and D94. NADP(+)-binding positions include G115–A119, N139–R144, and V199. Y201 serves as a coordination point for shikimate. Position 221 (G221) interacts with NADP(+).

Belongs to the shikimate dehydrogenase family. In terms of assembly, homodimer.

The catalysed reaction is shikimate + NADP(+) = 3-dehydroshikimate + NADPH + H(+). Its pathway is metabolic intermediate biosynthesis; chorismate biosynthesis; chorismate from D-erythrose 4-phosphate and phosphoenolpyruvate: step 4/7. Its function is as follows. Involved in the biosynthesis of the chorismate, which leads to the biosynthesis of aromatic amino acids. Catalyzes the reversible NADPH linked reduction of 3-dehydroshikimate (DHSA) to yield shikimate (SA). The sequence is that of Shikimate dehydrogenase (NADP(+)) from Thermotoga maritima (strain ATCC 43589 / DSM 3109 / JCM 10099 / NBRC 100826 / MSB8).